Consider the following 388-residue polypeptide: Chorismate synthase (388 aa).

NADP(+) contacts are provided by arginine 39 and arginine 45. Residues arginine 132–serine 134, asparagine 251–alanine 252, glycine 296, lysine 311–threonine 315, and arginine 337 contribute to the FMN site.

The protein belongs to the chorismate synthase family. In terms of assembly, homotetramer. Requires FMNH2 as cofactor.

The catalysed reaction is 5-O-(1-carboxyvinyl)-3-phosphoshikimate = chorismate + phosphate. Its pathway is metabolic intermediate biosynthesis; chorismate biosynthesis; chorismate from D-erythrose 4-phosphate and phosphoenolpyruvate: step 7/7. In terms of biological role, catalyzes the anti-1,4-elimination of the C-3 phosphate and the C-6 proR hydrogen from 5-enolpyruvylshikimate-3-phosphate (EPSP) to yield chorismate, which is the branch point compound that serves as the starting substrate for the three terminal pathways of aromatic amino acid biosynthesis. This reaction introduces a second double bond into the aromatic ring system. The protein is Chorismate synthase of Staphylococcus aureus (strain bovine RF122 / ET3-1).